An 887-amino-acid polypeptide reads, in one-letter code: Cadherin-1 (887 aa).

The N-terminal stretch at 1 to 26 is a signal peptide; that stretch reads MGRRWGSPALQRFPVLVLLLLLQVCG. Residues 27 to 160 constitute a propeptide that is removed on maturation; it reads RRCDEAAPCQ…DPGFLRRQKR (134 aa). 5 Cadherin domains span residues 161 to 268, 269 to 381, 382 to 493, 494 to 599, and 600 to 704; these read DWVI…KPVF, IKEV…IPIF, NPTM…PPVF, VPPI…DNGP, and TPEP…RRSY. Residues 161-714 lie on the Extracellular side of the membrane; sequence DWVIPPISCL…IVGGLGVPAI (554 aa). Ca(2+) is bound at residue aspartate 263. Asparagine 291 carries N-linked (GlcNAc...) asparagine glycosylation. Residue aspartate 294 coordinates Ca(2+). N-linked (GlcNAc...) asparagine glycosylation is present at asparagine 346. Residues asparagine 564 and asparagine 643 are each glycosylated (N-linked (GlcNAc...) asparagine). The chain crosses the membrane as a helical span at residues 715–735; that stretch reads LGILGGILALLILLLLLLLFA. Over 736 to 887 the chain is Cytoplasmic; sequence RRRKVEKEPL…ELYGGGEDDE (152 aa). The interval 745–770 is disordered; sequence LLPPEDDMRDNVYNYDEEGGGEEDQD. The span at 759–770 shows a compositional bias: acidic residues; the sequence is YDEEGGGEEDQD.

In terms of assembly, homodimer. Interacts with CTNNA2. Expressed in the liver.

The protein localises to the cell junction. The protein resides in the adherens junction. It localises to the cell membrane. Its subcellular location is the endosome. It is found in the golgi apparatus. The protein localises to the trans-Golgi network. The protein resides in the cytoplasm. It localises to the desmosome. In terms of biological role, cadherins are calcium-dependent cell adhesion proteins. They preferentially interact with themselves in a homophilic manner in connecting cells; cadherins may thus contribute to the sorting of heterogeneous cell types. Promotes organization of radial actin fiber structure and cellular response to contractile forces, via anchoring of radial actin fibers to CDH1 junction complexes at the cell membrane. E-cadherin is a ligand for integrin alpha-E/beta-7. The chain is Cadherin-1 (CDH1) from Gallus gallus (Chicken).